Reading from the N-terminus, the 124-residue chain is Small ribosomal subunit protein uS12 (124 aa).

Aspartate 89 carries the 3-methylthioaspartic acid modification.

This sequence belongs to the universal ribosomal protein uS12 family. As to quaternary structure, part of the 30S ribosomal subunit. Contacts proteins S8 and S17. May interact with IF1 in the 30S initiation complex.

In terms of biological role, with S4 and S5 plays an important role in translational accuracy. Interacts with and stabilizes bases of the 16S rRNA that are involved in tRNA selection in the A site and with the mRNA backbone. Located at the interface of the 30S and 50S subunits, it traverses the body of the 30S subunit contacting proteins on the other side and probably holding the rRNA structure together. The combined cluster of proteins S8, S12 and S17 appears to hold together the shoulder and platform of the 30S subunit. This chain is Small ribosomal subunit protein uS12, found in Serratia proteamaculans (strain 568).